Reading from the N-terminus, the 105-residue chain is Fluoride-specific ion channel FluC (105 aa).

3 helical membrane-spanning segments follow: residues 14–34 (FPLPILTVNVLGSFLMGVFVV), 44–64 (LSPLVMTGLLGGFTTFSAFSL), and 79–99 (ALYVALSVGLSIAGLMAGLWL). Na(+) contacts are provided by Gly-54 and Thr-57.

This sequence belongs to the fluoride channel Fluc/FEX (TC 1.A.43) family.

The protein resides in the cell inner membrane. It carries out the reaction fluoride(in) = fluoride(out). With respect to regulation, na(+) is not transported, but it plays an essential structural role and its presence is essential for fluoride channel function. Its function is as follows. Fluoride-specific ion channel. Important for reducing fluoride concentration in the cell, thus reducing its toxicity. The chain is Fluoride-specific ion channel FluC from Jannaschia sp. (strain CCS1).